The primary structure comprises 404 residues: Probable tRNA sulfurtransferase (404 aa).

The 106-residue stretch at 61–166 (QTLVTGLPKI…HDATYMMAQV (106 aa)) folds into the THUMP domain. Residues 184–185 (ML), 209–210 (HF), arginine 266, glycine 288, and glutamine 297 contribute to the ATP site.

It belongs to the ThiI family.

The protein resides in the cytoplasm. It catalyses the reaction [ThiI sulfur-carrier protein]-S-sulfanyl-L-cysteine + a uridine in tRNA + 2 reduced [2Fe-2S]-[ferredoxin] + ATP + H(+) = [ThiI sulfur-carrier protein]-L-cysteine + a 4-thiouridine in tRNA + 2 oxidized [2Fe-2S]-[ferredoxin] + AMP + diphosphate. The catalysed reaction is [ThiS sulfur-carrier protein]-C-terminal Gly-Gly-AMP + S-sulfanyl-L-cysteinyl-[cysteine desulfurase] + AH2 = [ThiS sulfur-carrier protein]-C-terminal-Gly-aminoethanethioate + L-cysteinyl-[cysteine desulfurase] + A + AMP + 2 H(+). The protein operates within cofactor biosynthesis; thiamine diphosphate biosynthesis. Its function is as follows. Catalyzes the ATP-dependent transfer of a sulfur to tRNA to produce 4-thiouridine in position 8 of tRNAs, which functions as a near-UV photosensor. Also catalyzes the transfer of sulfur to the sulfur carrier protein ThiS, forming ThiS-thiocarboxylate. This is a step in the synthesis of thiazole, in the thiamine biosynthesis pathway. The sulfur is donated as persulfide by IscS. The polypeptide is Probable tRNA sulfurtransferase (Lysinibacillus sphaericus (strain C3-41)).